Reading from the N-terminus, the 158-residue chain is Endoribonuclease YbeY (158 aa).

The Zn(2+) site is built by H117, H121, and H127.

Belongs to the endoribonuclease YbeY family. The cofactor is Zn(2+).

It is found in the cytoplasm. In terms of biological role, single strand-specific metallo-endoribonuclease involved in late-stage 70S ribosome quality control and in maturation of the 3' terminus of the 16S rRNA. This is Endoribonuclease YbeY from Psychromonas ingrahamii (strain DSM 17664 / CCUG 51855 / 37).